Here is a 293-residue protein sequence, read N- to C-terminus: MSADTVEQLLQCALSELTARFVTQATPVPTGLLEALDADPRAGAHALARRIRSRQEKNRAEGQRMRKLLRFETELWEQGHTHIAGVDEAGMAPLAGPVVAAAAVLPKGFRLKGLDDSKKILDAEKRESLAEAIKRDAVAWAVGRAEVEEIDRINIYHAGLLAMRRAVEGLSVKPDHLLVDARTVPECSVPQKGIIKGDALSLSIAAASILAKTTRDRWMAELDDQYPGYGLAAHKGYPTPHHLQVLREKGVLPIHRRSFAPVREALGLPTGSPPSALQAELFPEAPSRTGVKS.

Positions 81–271 (THIAGVDEAG…VREALGLPTG (191 aa)) constitute an RNase H type-2 domain. A divalent metal cation contacts are provided by aspartate 87, glutamate 88, and aspartate 180. The segment at 273–293 (PPSALQAELFPEAPSRTGVKS) is disordered.

Belongs to the RNase HII family. Requires Mn(2+) as cofactor. It depends on Mg(2+) as a cofactor.

The protein resides in the cytoplasm. It catalyses the reaction Endonucleolytic cleavage to 5'-phosphomonoester.. Endonuclease that specifically degrades the RNA of RNA-DNA hybrids. The sequence is that of Ribonuclease HII from Myxococcus xanthus (strain DK1622).